The sequence spans 130 residues: Flagellar assembly factor FliW (130 aa).

The protein belongs to the FliW family. As to quaternary structure, interacts with translational regulator CsrA and flagellin(s).

The protein localises to the cytoplasm. Acts as an anti-CsrA protein, binds CsrA and prevents it from repressing translation of its target genes, one of which is flagellin. Binds to flagellin and participates in the assembly of the flagellum. The polypeptide is Flagellar assembly factor FliW (Borrelia hermsii (strain HS1 / DAH)).